The chain runs to 444 residues: Phosphoribosylamine--glycine ligase (444 aa).

Residues 109-324 (RNLFKKYEID…FLDVCFAIAE (216 aa)) enclose the ATP-grasp domain. 140–202 (MTSLGKDVVV…EEKLVGVEFT (63 aa)) is a binding site for ATP. Q282, E294, and N296 together coordinate Mg(2+). Mn(2+)-binding residues include Q282, E294, and N296.

The protein belongs to the GARS family. The cofactor is Mg(2+). Mn(2+) is required as a cofactor.

The catalysed reaction is 5-phospho-beta-D-ribosylamine + glycine + ATP = N(1)-(5-phospho-beta-D-ribosyl)glycinamide + ADP + phosphate + H(+). It participates in purine metabolism; IMP biosynthesis via de novo pathway; N(1)-(5-phospho-D-ribosyl)glycinamide from 5-phospho-alpha-D-ribose 1-diphosphate: step 2/2. The chain is Phosphoribosylamine--glycine ligase from Methanococcus maripaludis (strain C7 / ATCC BAA-1331).